Consider the following 521-residue polypeptide: Caspase-10 (521 aa).

A propeptide spanning residues 1 to 219 is cleaved from the precursor; sequence MKSQGQHWYS…GEEELVSQTD (219 aa). 2 DED domains span residues 19–97 and 114–187; these read SFRE…HLNC and LFRN…NIEK. Composition is skewed to polar residues over residues 231–248 and 259–268; these read SWQN…TNGA and ASANTLNSET. The disordered stretch occupies residues 231–269; that stretch reads SWQNKHAGSNGNRATNGAPSLVSRGMQGASANTLNSETS. Catalysis depends on residues His-358 and Cys-401.

It belongs to the peptidase C14A family. As to quaternary structure, heterotetramer that consists of two anti-parallel arranged heterodimers, each one formed by a 23/17 kDa (p23/17) (depending on the splicing events) and a 12 kDa (p12) subunit. Self-associates. Interacts with FADD and CASP8. Found in a Fas signaling complex consisting of FAS, FADD, CASP8 and CASP10. Interacts with RFFL and RNF34; negatively regulate CASP10 through proteasomal degradation. Interacts with RIOK3. In terms of processing, cleavage by granzyme B and autocatalytic activity generate the two active subunits. As to expression, detectable in most tissues. Lowest expression is seen in brain, kidney, prostate, testis and colon.

It catalyses the reaction Strict requirement for Asp at position P1 and has a preferred cleavage sequence of Leu-Gln-Thr-Asp-|-Gly.. In terms of biological role, involved in the activation cascade of caspases responsible for apoptosis execution. Recruited to both Fas- and TNFR-1 receptors in a FADD dependent manner. May participate in the granzyme B apoptotic pathways. Cleaves and activates effector caspases CASP3, CASP4, CASP6, CASP7, CASP8 and CASP9. Hydrolyzes the small- molecule substrates, Tyr-Val-Ala-Asp-|-AMC and Asp-Glu-Val-Asp-|-AMC. Functionally, isoform 7 can enhance NF-kappaB activity but promotes only slight apoptosis. Isoform C is proteolytically inactive. This Homo sapiens (Human) protein is Caspase-10 (CASP10).